We begin with the raw amino-acid sequence, 293 residues long: MAGSREIRNKIKSVKNTQKITRAMEMVAASKMRRAQERMKKARPYGEKIRNVAAHMSRAYTEYRHPFLIERDTVKRIGIIVVTSDKGLCGGLNTNVLRMAVSKMKAWEAEGEQIEVCCIGNKGLGFMNRMGANVISHAVSLGDAPDLERLIGAIKILLDGYNQDRFDRVYLFYTRFINTMKQEPVMEQLLPLSDERLRASDRPTGQRGVWDYIYEPEAKPVIDDIMVRYVEALIYQALTENIASEQSARMVAMKAASDNAGNVINELTLIYNKSRQAAITKELSEIVGGAAAV.

Belongs to the ATPase gamma chain family. As to quaternary structure, F-type ATPases have 2 components, CF(1) - the catalytic core - and CF(0) - the membrane proton channel. CF(1) has five subunits: alpha(3), beta(3), gamma(1), delta(1), epsilon(1). CF(0) has three main subunits: a, b and c.

The protein localises to the cell inner membrane. Produces ATP from ADP in the presence of a proton gradient across the membrane. The gamma chain is believed to be important in regulating ATPase activity and the flow of protons through the CF(0) complex. The polypeptide is ATP synthase gamma chain (Nitrosospira multiformis (strain ATCC 25196 / NCIMB 11849 / C 71)).